The chain runs to 79 residues: Sec-independent protein translocase protein TatA (79 aa).

The helical transmembrane segment at 1-21 (MGGFTSIWHWVIVLLVIVLLF) threads the bilayer. The interval 48 to 79 (EEEAKNEPKTLDAQVAQTKVHETSEIKSKQES) is disordered. Residues 66–79 (KVHETSEIKSKQES) show a composition bias toward basic and acidic residues.

Belongs to the TatA/E family. The Tat system comprises two distinct complexes: a TatABC complex, containing multiple copies of TatA, TatB and TatC subunits, and a separate TatA complex, containing only TatA subunits. Substrates initially bind to the TatABC complex, which probably triggers association of the separate TatA complex to form the active translocon.

The protein localises to the cell inner membrane. In terms of biological role, part of the twin-arginine translocation (Tat) system that transports large folded proteins containing a characteristic twin-arginine motif in their signal peptide across membranes. TatA could form the protein-conducting channel of the Tat system. In Helicobacter pylori (strain Shi470), this protein is Sec-independent protein translocase protein TatA.